Consider the following 469-residue polypeptide: MSIQTQEAHDMSLKSLSLIATHSHIVGLGLDENLQPKPSSQGMVGQLQARRAAGVILKMVQNGTIAGRAVLVAGPPSTGKTALAMGLSQSLGADVPFTAMAGSEIFSLELSKTEALTQAFRKSIGVKIKEDTELIEGEVVEIQIDRSITGGHKQGKLTIKTTDMETIYELGNKMIDGLTKEKVLAGDVISIDKACGKITKLGRSFARSRDYDAMGPDTKFVQCPEGELQKRKSVVHTVSLHEIDVINSRTQGFLALFTGDTGEIRSEVRDQINTKVAEWKEEGKAEIVPGVLFIDEVHMLDIECFSFINRALEDEFAPIVIMATNRGISKTRGTNYKSPHGLPLDLLDRSIIITTQNYSEQEIKTILSIRSQEEEVELTEDALDLLTKIGGETSLRYSSNLIAVSQQIAQKRKSSSVDVQDVKRAYLLFLDSTRSAKYLQEYESRYIDDHGRVDISTTGRNADAMDTNE.

Residue 74–81 (GPPSTGKT) participates in ATP binding.

It belongs to the RuvB family. In terms of assembly, may form heterododecamers with RVB1. Component of the SWR1 chromatin remodeling complex, the INO80 chromatin remodeling complex, and of the R2TP complex.

The protein localises to the nucleus. The catalysed reaction is ATP + H2O = ADP + phosphate + H(+). Its function is as follows. DNA helicase which participates in several chromatin remodeling complexes, including the SWR1 and the INO80 complexes. The SWR1 complex mediates the ATP-dependent exchange of histone H2A for the H2A variant HZT1 leading to transcriptional regulation of selected genes by chromatin remodeling. The INO80 complex remodels chromatin by shifting nucleosomes and is involved in DNA repair. Also involved in pre-rRNA processing. In Eremothecium gossypii (strain ATCC 10895 / CBS 109.51 / FGSC 9923 / NRRL Y-1056) (Yeast), this protein is RuvB-like helicase 2 (RVB2).